Reading from the N-terminus, the 332-residue chain is Melanocortin receptor 4 (332 aa).

Topologically, residues 1–43 (MVNSTHRGMHASLHLWNRSSHRLHSNASESLGKGYSDGGCYEQ) are extracellular. Residues N3, N17, and N26 are each glycosylated (N-linked (GlcNAc...) asparagine). Intrachain disulfides connect C40/C279 and C271/C277. A helical membrane pass occupies residues 44 to 69 (LFVSPEVFVTLGVISLLENILVIVAI). Residues 70-81 (AKNKNLHSPMYF) lie on the Cytoplasmic side of the membrane. The helical transmembrane segment at 82 to 106 (FICSLAVADMLVSVSNGSETIVITL) threads the bilayer. Positions 100, 122, and 126 each coordinate Ca(2+). Residues 107-123 (LNSTDTDTQSFTVNIDN) lie on the Extracellular side of the membrane. The chain crosses the membrane as a helical span at residues 124-145 (VIDSVICSSLLASICSLLSIAV). Residues 146-165 (DRYFTIFYALQYHNIMTVKR) are Cytoplasmic-facing. Residues 166–186 (VRIIISCIWAACTVSGILFII) traverse the membrane as a helical segment. Over 187-191 (YSDSS) the chain is Extracellular. A helical membrane pass occupies residues 192–215 (AVIICLITMFFTMLALMASLYVHM). Residues 216–248 (FLMARLHIKRIAVLPGTGAIRQGANMKGAITLT) are Cytoplasmic-facing. Residues 249-271 (ILIGVFVVCWAPFFLHLIFYISC) traverse the membrane as a helical segment. Residues 272–280 (PQNPYCVCF) lie on the Extracellular side of the membrane. A helical transmembrane segment spans residues 281–304 (MSHFNLYLILIMCNSVIDPLIYAL). Residues 305–332 (RSQELRKTFKEIICCYPLGGLCDLSSRY) are Cytoplasmic-facing. C318 is lipidated: S-palmitoyl cysteine.

Belongs to the G-protein coupled receptor 1 family. In terms of assembly, homodimer; disulfide-linked, also forms higher order oligomers. Interacts with GNAS. Interacts with ATRNL1. Interacts with MGRN1; this interaction competes with GNAS-binding and thus inhibits agonist-induced cAMP production. Interacts with MRAP and MRAP2; these associated factors increase ligand-sensitivity and generation of cAMP.

It is found in the cell membrane. Functionally, hormone receptor that acts as a key component of the leptin-melanocortin pathway at the intersection of homeostatic maintenance of energetic state. Plays a role in regulating food intake: activation by a stimulating hormone such as anorexigenic alpha-melanocyte stimulating hormone (alpha-MSH) inhibits appetite, whereas binding to a natural antagonist like Agouti-related protein/AGRP promotes appetite. G-protein-coupled receptor that activates conventional Galphas signaling leading to induction of anorexogenic signaling in the hypothalamus to result in negative energy balance. Regulates the firing activity of neurons from the hypothalamus by alpha-MSH and AGRP independently of Galphas signaling by ligand-induced coupling of closure of inwardly rectifying potassium channel KCNJ13. In intestinal epithelial cells, plays a role in the inhibition of hepatic glucose production via nesfatin-1/NUCB2 leading to increased cyclic adenosine monophosphate (cAMP) levels and glucagon-like peptide 1 (GLP-1) secretion in the intestinal epithelium. The polypeptide is Melanocortin receptor 4 (MC4R) (Macaca fascicularis (Crab-eating macaque)).